The following is a 554-amino-acid chain: 2-succinyl-5-enolpyruvyl-6-hydroxy-3-cyclohexene-1-carboxylate synthase (554 aa).

This sequence belongs to the TPP enzyme family. MenD subfamily. In terms of assembly, homodimer. Requires Mg(2+) as cofactor. Mn(2+) is required as a cofactor. Thiamine diphosphate serves as cofactor.

The catalysed reaction is isochorismate + 2-oxoglutarate + H(+) = 5-enolpyruvoyl-6-hydroxy-2-succinyl-cyclohex-3-ene-1-carboxylate + CO2. The protein operates within quinol/quinone metabolism; 1,4-dihydroxy-2-naphthoate biosynthesis; 1,4-dihydroxy-2-naphthoate from chorismate: step 2/7. It participates in quinol/quinone metabolism; menaquinone biosynthesis. Functionally, catalyzes the thiamine diphosphate-dependent decarboxylation of 2-oxoglutarate and the subsequent addition of the resulting succinic semialdehyde-thiamine pyrophosphate anion to isochorismate to yield 2-succinyl-5-enolpyruvyl-6-hydroxy-3-cyclohexene-1-carboxylate (SEPHCHC). The protein is 2-succinyl-5-enolpyruvyl-6-hydroxy-3-cyclohexene-1-carboxylate synthase of Flavobacterium johnsoniae (strain ATCC 17061 / DSM 2064 / JCM 8514 / BCRC 14874 / CCUG 350202 / NBRC 14942 / NCIMB 11054 / UW101) (Cytophaga johnsonae).